We begin with the raw amino-acid sequence, 215 residues long: ATP phosphoribosyltransferase (215 aa).

This sequence belongs to the ATP phosphoribosyltransferase family. Short subfamily. Heteromultimer composed of HisG and HisZ subunits.

It localises to the cytoplasm. It carries out the reaction 1-(5-phospho-beta-D-ribosyl)-ATP + diphosphate = 5-phospho-alpha-D-ribose 1-diphosphate + ATP. Its pathway is amino-acid biosynthesis; L-histidine biosynthesis; L-histidine from 5-phospho-alpha-D-ribose 1-diphosphate: step 1/9. In terms of biological role, catalyzes the condensation of ATP and 5-phosphoribose 1-diphosphate to form N'-(5'-phosphoribosyl)-ATP (PR-ATP). Has a crucial role in the pathway because the rate of histidine biosynthesis seems to be controlled primarily by regulation of HisG enzymatic activity. The chain is ATP phosphoribosyltransferase from Acidithiobacillus ferrooxidans (strain ATCC 23270 / DSM 14882 / CIP 104768 / NCIMB 8455) (Ferrobacillus ferrooxidans (strain ATCC 23270)).